Reading from the N-terminus, the 127-residue chain is Glycine cleavage system H protein (127 aa).

A Lipoyl-binding domain is found at 24-106; the sequence is TVTVGITDHA…FEGAWIAKIK (83 aa). At Lys-65 the chain carries N6-lipoyllysine.

The protein belongs to the GcvH family. In terms of assembly, the glycine cleavage system is composed of four proteins: P, T, L and H. (R)-lipoate serves as cofactor.

In terms of biological role, the glycine cleavage system catalyzes the degradation of glycine. The H protein shuttles the methylamine group of glycine from the P protein to the T protein. This Marinomonas sp. (strain MWYL1) protein is Glycine cleavage system H protein.